Here is a 499-residue protein sequence, read N- to C-terminus: Probable cytosol aminopeptidase (499 aa).

Mn(2+)-binding residues include Lys-263 and Asp-268. The active site involves Lys-275. Asp-286, Asp-345, and Glu-347 together coordinate Mn(2+). Arg-349 is a catalytic residue.

This sequence belongs to the peptidase M17 family. Requires Mn(2+) as cofactor.

It is found in the cytoplasm. It catalyses the reaction Release of an N-terminal amino acid, Xaa-|-Yaa-, in which Xaa is preferably Leu, but may be other amino acids including Pro although not Arg or Lys, and Yaa may be Pro. Amino acid amides and methyl esters are also readily hydrolyzed, but rates on arylamides are exceedingly low.. The enzyme catalyses Release of an N-terminal amino acid, preferentially leucine, but not glutamic or aspartic acids.. Functionally, presumably involved in the processing and regular turnover of intracellular proteins. Catalyzes the removal of unsubstituted N-terminal amino acids from various peptides. The protein is Probable cytosol aminopeptidase of Chlamydia caviae (strain ATCC VR-813 / DSM 19441 / 03DC25 / GPIC) (Chlamydophila caviae).